A 322-amino-acid polypeptide reads, in one-letter code: Replication factor C small subunit (322 aa).

45–52 (GPPGVGKT) contacts ATP.

It belongs to the activator 1 small subunits family. RfcS subfamily. In terms of assembly, heteromultimer composed of small subunits (RfcS) and large subunits (RfcL).

Functionally, part of the RFC clamp loader complex which loads the PCNA sliding clamp onto DNA. The sequence is that of Replication factor C small subunit from Methanocella arvoryzae (strain DSM 22066 / NBRC 105507 / MRE50).